A 288-amino-acid polypeptide reads, in one-letter code: Glucose-1-phosphate thymidylyltransferase (288 aa).

G8 contributes to the dTDP-alpha-D-glucose binding site. Positions 8, 11, 12, 13, 23, 24, 80, 85, and 108 each coordinate dTTP. DTDP-alpha-D-glucose is bound by residues K23, Q24, Q80, G85, D108, N109, G143, E158, K159, V169, and D222. D108 contacts Mg(2+). D222 lines the Mg(2+) pocket.

The protein belongs to the glucose-1-phosphate thymidylyltransferase family. Requires Mg(2+) as cofactor.

It carries out the reaction dTTP + alpha-D-glucose 1-phosphate + H(+) = dTDP-alpha-D-glucose + diphosphate. It participates in carbohydrate biosynthesis; dTDP-L-rhamnose biosynthesis. In terms of biological role, catalyzes the conversion of glucose-1-phosphate and dTTP to dTDP-glucose and pyrophosphate. Involved in the biosynthesis of the dTDP-L-rhamnose which is a component of the critical linker, D-N-acetylglucosamine-L-rhamnose disaccharide, which connects the galactan region of arabinogalactan to peptidoglycan via a phosphodiester linkage. This Mycobacterium tuberculosis (strain CDC 1551 / Oshkosh) protein is Glucose-1-phosphate thymidylyltransferase (rmlA).